Consider the following 580-residue polypeptide: PTS system fructose-specific EIIB'BC component (580 aa).

PTS EIIB type-2 domains follow at residues 3–100 and 124–221; these read MKIA…QAAE and KKIV…NAFA. Catalysis depends on phosphocysteine intermediate; for EIIB activity residues Cys11 and Cys132. Residues Cys11 and Cys132 each carry the phosphocysteine; by EIIA modification. The PTS EIIC type-2 domain occupies 244–579; the sequence is VYKHLMTGVS…KKSAQAKAVA (336 aa). Helical transmembrane passes span 254–274, 292–312, 322–342, 367–387, 408–428, 448–468, 480–500, 507–527, and 537–557; these read HMLP…VFGI, GGSA…FSIA, IGGM…VAGF, ILII…YVVG, NAIL…GGPV, MAAI…ATFI, AGKA…IPFA, VIPA…LFGA, and FVLL…AIAV.

The protein localises to the cell inner membrane. The catalysed reaction is D-fructose(out) + N(pros)-phospho-L-histidyl-[protein] = D-fructose 1-phosphate(in) + L-histidyl-[protein]. The phosphoenolpyruvate-dependent sugar phosphotransferase system (sugar PTS), a major carbohydrate active transport system, catalyzes the phosphorylation of incoming sugar substrates concomitantly with their translocation across the cell membrane. The enzyme II FruAB PTS system is involved in fructose transport. This Vibrio cholerae serotype O1 (strain ATCC 39315 / El Tor Inaba N16961) protein is PTS system fructose-specific EIIB'BC component.